Reading from the N-terminus, the 308-residue chain is MMPPVRGTLTEGRPLADLTWLRVGGPADWLFQPADEEDLAGFLAAHDPAVPVFPMGVGSNLIVRDGGLRAVVIRLGRGFNGIRVEGERVIAGAAALDAHVARRAAEAGRDLTFLRTIPGTIGGAVRMNAGCYGSYVADHLIEVRAITREGRAVTLPAADLGLAYRQSRLPEGWVLVEAAFRADAGDPAALARRMDEQIARRDSSQPTRDRSAGSTFRNPAGFSSTGRADDTHELKAWKLIDEAGMRGARRGGAQMSEMHSNFLINTGGATAADLEGLGEEVIKRVFQSSGIELQWEIMRVGEEPVNKQ.

The FAD-binding PCMH-type domain occupies 22-185; that stretch reads RVGGPADWLF…VEAAFRADAG (164 aa). R165 is an active-site residue. Residues 197-211 are compositionally biased toward basic and acidic residues; sequence QIARRDSSQPTRDRS. The segment at 197–228 is disordered; sequence QIARRDSSQPTRDRSAGSTFRNPAGFSSTGRA. The segment covering 212–226 has biased composition (polar residues); it reads AGSTFRNPAGFSSTG. S214 (proton donor) is an active-site residue. E296 is an active-site residue.

This sequence belongs to the MurB family. FAD serves as cofactor.

It is found in the cytoplasm. It catalyses the reaction UDP-N-acetyl-alpha-D-muramate + NADP(+) = UDP-N-acetyl-3-O-(1-carboxyvinyl)-alpha-D-glucosamine + NADPH + H(+). It functions in the pathway cell wall biogenesis; peptidoglycan biosynthesis. Cell wall formation. The chain is UDP-N-acetylenolpyruvoylglucosamine reductase from Cereibacter sphaeroides (strain ATCC 17025 / ATH 2.4.3) (Rhodobacter sphaeroides).